Here is a 53-residue protein sequence, read N- to C-terminus: Large ribosomal subunit protein bL32c (53 aa).

The tract at residues 1–21 (MAVPKKRTSKSKKKSRRSHWI) is disordered.

The protein belongs to the bacterial ribosomal protein bL32 family.

Its subcellular location is the plastid. The protein resides in the chloroplast. The chain is Large ribosomal subunit protein bL32c (rpl32) from Cyanidium caldarium (Red alga).